Consider the following 82-residue polypeptide: UPF0235 protein Pden_2174 (82 aa).

The protein belongs to the UPF0235 family.

The chain is UPF0235 protein Pden_2174 from Paracoccus denitrificans (strain Pd 1222).